The chain runs to 141 residues: uncharacterized protein (141 aa).

A run of 5 helical transmembrane segments spans residues 7 to 27, 34 to 54, 69 to 89, 97 to 117, and 121 to 141; these read FWALLSAAFAALTAVFAKVGV, FATLIRTVVILCVIAAIVAAT, LFLALSGLATGASWLAYFRAL, VAPLDKLSIVMVAIFGVLFLG, and NLMNWLGVAFIAAGALLLAVF. In terms of domain architecture, EamA spans 14–140; that stretch reads AFAALTAVFA…IAAGALLLAV (127 aa).

Belongs to the EamA transporter family.

It localises to the cell membrane. This is an uncharacterized protein from Sinorhizobium sp.